Here is a 261-residue protein sequence, read N- to C-terminus: Thiamine thiazole synthase (261 aa).

Residues Ser33, 52–53, Gly60, Val124, and 152–154 contribute to the NAD(+) site; these read ER and HVD. Asp154 and His169 together coordinate Fe cation. Met219 is an NAD(+) binding site. Residue Arg229 participates in glycine binding.

It belongs to the THI4 family. Homooctamer; tetramer of dimers. Fe(2+) serves as cofactor.

It carries out the reaction hydrogen sulfide + glycine + NAD(+) = ADP-5-ethyl-4-methylthiazole-2-carboxylate + nicotinamide + 3 H2O + H(+). Its pathway is cofactor biosynthesis; thiamine diphosphate biosynthesis. Involved in the biosynthesis of the thiazole moiety of thiamine. Catalyzes the conversion of NAD and glycine to adenosine diphosphate 5-(2-hydroxyethyl)-4-methylthiazole-2-carboxylate (ADT), an adenylated thiazole intermediate, using free sulfide as a source of sulfur. The chain is Thiamine thiazole synthase from Pyrobaculum arsenaticum (strain DSM 13514 / JCM 11321 / PZ6).